The primary structure comprises 314 residues: MKIILANPRGFCAGVDRAISIVELALEIHGAPIYVRHEVVHNRFVVNGLRERGAIFVEELSEVPDGAIVIFSAHGVSQAVRQEAKDRNLKVFDATCPLVTKVHMQVARASRKGTKAILIGHKGHPEVEGTMGQYSNEDGGIFLIEKVEDIARLPMQENDNLTFMTQTTLSLDDTAETIAALKEKYPAIQGPHKNDICYATTNRQEAVRELAKLSDLVLVVGSKNSSNSNRLAELASRMGVKSQLLDDPADIQADWFNDVKTIGITAGASAPEELVQSIISRLKRFGANSIEELQGLEENMFFEVPKELRIKEVN.

Cysteine 12 is a binding site for [4Fe-4S] cluster. Positions 41 and 74 each coordinate (2E)-4-hydroxy-3-methylbut-2-enyl diphosphate. Dimethylallyl diphosphate-binding residues include histidine 41 and histidine 74. 2 residues coordinate isopentenyl diphosphate: histidine 41 and histidine 74. A [4Fe-4S] cluster-binding site is contributed by cysteine 96. Histidine 124 contributes to the (2E)-4-hydroxy-3-methylbut-2-enyl diphosphate binding site. Position 124 (histidine 124) interacts with dimethylallyl diphosphate. Histidine 124 lines the isopentenyl diphosphate pocket. Glutamate 126 acts as the Proton donor in catalysis. Threonine 167 contacts (2E)-4-hydroxy-3-methylbut-2-enyl diphosphate. A [4Fe-4S] cluster-binding site is contributed by cysteine 197. (2E)-4-hydroxy-3-methylbut-2-enyl diphosphate-binding residues include serine 225, serine 226, asparagine 227, and serine 269. Residues serine 225, serine 226, asparagine 227, and serine 269 each coordinate dimethylallyl diphosphate. Positions 225, 226, 227, and 269 each coordinate isopentenyl diphosphate.

The protein belongs to the IspH family. [4Fe-4S] cluster serves as cofactor.

It catalyses the reaction isopentenyl diphosphate + 2 oxidized [2Fe-2S]-[ferredoxin] + H2O = (2E)-4-hydroxy-3-methylbut-2-enyl diphosphate + 2 reduced [2Fe-2S]-[ferredoxin] + 2 H(+). It carries out the reaction dimethylallyl diphosphate + 2 oxidized [2Fe-2S]-[ferredoxin] + H2O = (2E)-4-hydroxy-3-methylbut-2-enyl diphosphate + 2 reduced [2Fe-2S]-[ferredoxin] + 2 H(+). Its pathway is isoprenoid biosynthesis; dimethylallyl diphosphate biosynthesis; dimethylallyl diphosphate from (2E)-4-hydroxy-3-methylbutenyl diphosphate: step 1/1. It participates in isoprenoid biosynthesis; isopentenyl diphosphate biosynthesis via DXP pathway; isopentenyl diphosphate from 1-deoxy-D-xylulose 5-phosphate: step 6/6. Catalyzes the conversion of 1-hydroxy-2-methyl-2-(E)-butenyl 4-diphosphate (HMBPP) into a mixture of isopentenyl diphosphate (IPP) and dimethylallyl diphosphate (DMAPP). Acts in the terminal step of the DOXP/MEP pathway for isoprenoid precursor biosynthesis. This is 4-hydroxy-3-methylbut-2-enyl diphosphate reductase from Haemophilus influenzae (strain PittEE).